The following is a 311-amino-acid chain: E3 ubiquitin-protein ligase RNF126 (311 aa).

Zn(2+) contacts are provided by cysteine 13, cysteine 16, cysteine 29, and cysteine 32. The C4-type zinc-finger motif lies at cysteine 13 to cysteine 32. Disordered regions lie at residues glutamate 42–serine 62 and glycine 95–alanine 133. Residues glutamate 101–serine 114 show a composition bias toward basic and acidic residues. Basic residues predominate over residues proline 123–alanine 133. The RING-type zinc-finger motif lies at cysteine 227–arginine 268. Positions glutamine 274 to serine 311 are disordered. The segment covering serine 289–serine 300 has biased composition (low complexity). A compositionally biased stretch (polar residues) spans proline 301 to serine 311.

The protein localises to the cytoplasm. Its subcellular location is the nucleus. The enzyme catalyses S-ubiquitinyl-[E2 ubiquitin-conjugating enzyme]-L-cysteine + [acceptor protein]-L-lysine = [E2 ubiquitin-conjugating enzyme]-L-cysteine + N(6)-ubiquitinyl-[acceptor protein]-L-lysine.. It participates in protein modification; protein ubiquitination. Its function is as follows. E3 ubiquitin-protein ligase that mediates ubiquitination oF target proteins. Depending on the associated E2 ligase, mediates 'Lys-27'-, 'Lys-29'-, 'Lys-48'- and/or 'Lys-63'-linked polyubiquitination of substrates. Part of a BAG6-dependent quality control process ensuring that proteins of the secretory pathway that are mislocalized to the cytosol are degraded by the proteasome. Probably acts by providing the ubiquitin ligase activity associated with the BAG6 complex and be responsible for ubiquitination of the hydrophobic mislocalized proteins and their targeting to the proteasome. This chain is E3 ubiquitin-protein ligase RNF126, found in Xenopus tropicalis (Western clawed frog).